The chain runs to 257 residues: Nuclear receptor subfamily 0 group B member 2 (257 aa).

The NR LBD domain maps to 16 to 257 (SRPAILYALL…GLLGDMLLLR (242 aa)). At R57 the chain carries Symmetric dimethylarginine; by PRMT5.

It belongs to the nuclear hormone receptor family. NR0 subfamily. As to quaternary structure, interacts (via N-terminus) with NEUROD1 (via N-terminus and C-terminus). Interacts with ID2. Interacts with RORG, NFIL3, NR1D1 and BHLHE41. Heterodimer; efficient DNA binding requires dimerization with another bHLH protein. Interacts with RARA, RXRA, THRB, NR5A1, NR5A2, NR1I3, PPARA, PPARG and EID1. Interacts with HNF4A; the resulting heterodimer is transcriptionally inactive. Interacts with DDX3X; this interaction disrupts the interaction between HNF4 and NR0B2/SHP that forms inactive heterodimers and enhances the formation of active HNF4 homodimers. Post-translationally, arginine methylation by PRMT5 enhances repression activity of metabolic genes in liver in response to bile acid signaling, by increasing interaction with cofactors. Liver. Low levels of expression were detected in heart and pancreas.

It localises to the nucleus. It is found in the cytoplasm. In terms of biological role, transcriptional regulator that acts as a negative regulator of receptor-dependent signaling pathways. Specifically inhibits transactivation of the nuclear receptor with which it interacts. Inhibits transcriptional activity of NEUROD1 on E-box-containing promoter by interfering with the coactivation function of the p300/CBP-mediated transcription complex for NEUROD1. Essential component of the liver circadian clock which via its interaction with NR1D1 and RORG regulates NPAS2-mediated hepatic lipid metabolism. Regulates the circadian expression of cytochrome P450 (CYP) enzymes. Represses: NR5A2 and HNF4A to down-regulate CYP2C38, NFLI3 to up-regulate CYP2A5, BHLHE41/HNF1A axis to up-regulate CYP1A2, CYP2E1 and CYP3A11, and NR1D1 to up-regulate CYP2B10, CYP4A10 and CYP4A14. This Homo sapiens (Human) protein is Nuclear receptor subfamily 0 group B member 2 (NR0B2).